The primary structure comprises 234 residues: Thrombin-like enzyme contortrixobin (234 aa).

In terms of domain architecture, Peptidase S1 spans 1–225 (VVGGDECNIN…YNDWIQSIIA (225 aa)). 6 disulfide bridges follow: Cys7/Cys139, Cys26/Cys42, Cys74/Cys232, Cys118/Cys186, Cys150/Cys165, and Cys176/Cys201. Residues His41 and Asp86 each act as charge relay system in the active site. Ser180 serves as the catalytic Charge relay system.

As to quaternary structure, monomer. In terms of processing, not glycosylated. In terms of tissue distribution, expressed by the venom gland.

The protein resides in the secreted. Its activity is regulated as follows. Strongly inhibited by diisopropylfluorophosphate (DFP) and to a lesser extent by PMSF, benzamidine and 4,6-diamidino-2-phenylindole. Low inhibition by hirudin. Functionally, thrombin-like snake venom serine protease that cleaves beta chain of fibrinogen (FGB), releasing fibrinopeptide B. Has a coagulant activity activating blood coagulation factors V (F5) and XIII (F13A1). The chain is Thrombin-like enzyme contortrixobin from Agkistrodon contortrix contortrix (Southern copperhead).